A 582-amino-acid polypeptide reads, in one-letter code: PCNA-interacting partner (582 aa).

2 stretches are compositionally biased toward polar residues: residues 471–487 (GVNS…SSGN) and 501–510 (KSSSLTGNTS). A disordered region spans residues 471 to 514 (GVNSSVGRPTIGTSSGNVHLGRSEKEKVARKSSSLTGNTSSKRK).

This sequence belongs to the PARI family. As to quaternary structure, interacts with RAD51 and PCNA. Interacts with PARP1. Interacts with TASOR.

Its subcellular location is the cytoplasm. It is found in the nucleus. In terms of biological role, required to suppress inappropriate homologous recombination, thereby playing a central role DNA repair and in the maintenance of genomic stability. Antagonizes homologous recombination by interfering with the formation of the RAD51-DNA homologous recombination structure. Binds single-strand DNA and poly(A) homopolymers. Positively regulate the poly(ADP-ribosyl)ation activity of PARP1; however such function may be indirect. This is PCNA-interacting partner (PARPBP) from Bos taurus (Bovine).